The chain runs to 46 residues: Protein PsbN (46 aa).

A helical membrane pass occupies residues 7–27; the sequence is GLSIAITFAVILLALTGFSIY.

The protein belongs to the PsbN family.

The protein localises to the cellular thylakoid membrane. Its function is as follows. May play a role in photosystem I and II biogenesis. This is Protein PsbN from Synechococcus elongatus (strain ATCC 33912 / PCC 7942 / FACHB-805) (Anacystis nidulans R2).